The following is a 547-amino-acid chain: Apolipoprotein N-acyltransferase (547 aa).

6 helical membrane passes run 31–51 (PLPAWSLAPVQVIALAVAAHA), 65–85 (GWLFAMFSFSLGLYWLYVSMH), 89–109 (GLAAPLAAAGVLALSAFLALF), 144–164 (AACWAALEWLRAVVLTGFPWL), 181–201 (LLGVHGMALLAAFAAAALAGL), and 215–235 (LAAGVALLLAGAGWLLGQFSW). The region spanning 248 to 511 (VQGNVEQSQK…AGVLPVAVQG (264 aa)) is the CN hydrolase domain. The active-site Proton acceptor is the Glu292. Lys366 is an active-site residue. Catalysis depends on Cys416, which acts as the Nucleophile.

The protein belongs to the CN hydrolase family. Apolipoprotein N-acyltransferase subfamily.

The protein resides in the cell inner membrane. It carries out the reaction N-terminal S-1,2-diacyl-sn-glyceryl-L-cysteinyl-[lipoprotein] + a glycerophospholipid = N-acyl-S-1,2-diacyl-sn-glyceryl-L-cysteinyl-[lipoprotein] + a 2-acyl-sn-glycero-3-phospholipid + H(+). It participates in protein modification; lipoprotein biosynthesis (N-acyl transfer). Catalyzes the phospholipid dependent N-acylation of the N-terminal cysteine of apolipoprotein, the last step in lipoprotein maturation. This is Apolipoprotein N-acyltransferase from Bordetella bronchiseptica (strain ATCC BAA-588 / NCTC 13252 / RB50) (Alcaligenes bronchisepticus).